The chain runs to 390 residues: HIT domain-containing protein DDB_G0272839 (390 aa).

The tract at residues 168–201 (DNENEKEKEKEMELDNDNTNTESIPPITSKSTST) is disordered. The span at 184 to 201 (DNTNTESIPPITSKSTST) shows a compositional bias: low complexity. The HIT domain maps to 232–343 (YFCNKPESFL…ISNDYNTKYL (112 aa)).

In Dictyostelium discoideum (Social amoeba), this protein is HIT domain-containing protein DDB_G0272839.